The following is a 529-amino-acid chain: MLSLVGRVASASASGALRGLNPLAALPQAHLLLRTAPAGVHPARDYAAQSSAAPKAGTATGQIVAVIGAVVDVQFDEGLPPILNALEVQGRESRLVLEVAQHLGESTVRTIAMDGTEGLVRGQKVLDSGAPIKIPVGPETLGRIMNVIGEPIDERGPIKTKQFAPIHAEAPEFIEMSVEQEILVTGIKVVDLLAPYAKGGKIGLFGGAGVGKTVLIMELINNVAKAHGGYSVFAGVGERTREGNDLYHEMIESGVINLKDATSKVALVYGQMNEPPGARARVALTGLTVAEYFRDQEGQDVLLFIDNIFRFTQAGSEVSALLGRIPSAVGYQPTLATDMGTMQERITTTKKGSITSVQAIYVPADDLTDPAPATTFAHLDATTVLSRAIAELGIYPAVDPLDSTSRIMDPNIVGSEHYDVARGVQKILQDYKSLQDIIAILGMDELSEEDKLTVSRARKIQRFLSQPFQVAEVFTGHMGKLVPLKETIKGFQQILAGDYDHLPEQAFYMVGPIEEAVAKADKLAEEHGS.

The transit peptide at 1 to 46 directs the protein to the mitochondrion; that stretch reads MLSLVGRVASASASGALRGLNPLAALPQAHLLLRTAPAGVHPARDY. An O-linked (GlcNAc) serine glycan is attached at S106. Residues K124, K133, and K161 each carry the N6-acetyllysine; alternate modification. An N6-succinyllysine; alternate mark is found at K124, K133, and K161. The residue at position 198 (K198) is an N6-acetyllysine. Positions 209, 210, 211, 212, 213, and 214 each coordinate ADP. G209 contributes to the ATP binding site. Residues G209, V210, G211, K212, and T213 each contribute to the phosphate site. ATP is bound by residues G211, K212, T213, and V214. A Mg(2+)-binding site is contributed by T213. E238 serves as a coordination point for Mg(2+). R239 serves as a coordination point for ATP. 2 positions are modified to N6-acetyllysine; alternate: K259 and K264. N6-succinyllysine; alternate is present on residues K259 and K264. T312 carries the phosphothreonine modification. Phosphoserine is present on S415. Residue K426 is modified to N6-acetyllysine. At S433 the chain carries Phosphoserine. An N6-acetyllysine mark is found at K480 and K485. K522 carries the N6-acetyllysine; alternate modification. Residue K522 is modified to N6-succinyllysine; alternate. S529 carries the post-translational modification Phosphoserine.

Belongs to the ATPase alpha/beta chains family. Homotrimer. Component of the ATP synthase complex composed at least of ATP5F1A/subunit alpha, ATP5F1B/subunit beta, ATP5MC1/subunit c (homooctomer), MT-ATP6/subunit a, MT-ATP8/subunit 8, ATP5ME/subunit e, ATP5MF/subunit f, ATP5MG/subunit g, ATP5MK/subunit k, ATP5MJ/subunit j, ATP5F1C/subunit gamma, ATP5F1D/subunit delta, ATP5F1E/subunit epsilon, ATP5PF/subunit F6, ATP5PB/subunit b, ATP5PD/subunit d, ATP5PO/subunit OSCP. ATP synthase complex consists of a soluble F(1) head domain (subunits alpha(3) and beta(3)) - the catalytic core - and a membrane F(0) domain - the membrane proton channel (subunits c, a, 8, e, f, g, k and j). These two domains are linked by a central stalk (subunits gamma, delta, and epsilon) rotating inside the F1 region and a stationary peripheral stalk (subunits F6, b, d, and OSCP). Interacts with PPIF. Interacts with BCL2L1 isoform BCL-X(L); the interaction mediates the association of BCL2L1 isoform BCL-X(L) with the mitochondrial membrane F(1)F(0) ATP synthase and enhances neurons metabolic efficiency. Interacts with CLN5 and PPT1. Interacts with S100A1; this interaction increases F1-ATPase activity. Interacts with MTLN. Interacts with TTC5/STRAP; the interaction results in decreased mitochondrial ATP production.

It localises to the mitochondrion inner membrane. The catalysed reaction is ATP + H2O + 4 H(+)(in) = ADP + phosphate + 5 H(+)(out). Catalytic subunit beta, of the soluble F(1) head domain within the mitochondrial ATP synthase complex (F(1)F(0) ATP synthase or complex V) that produces ATP from ADP and phosphate inorganique in the presence of a proton gradient across the membrane which is generated by electron transport complexes of the respiratory chain. With the non-catalytic subunit alpha (ATP5F1A), forms the catalytic core in the F(1) domain. ATP synthase complex consist of two structural domains, F(1) - containing the extramembraneous catalytic core, and F(0) - containing the membrane proton channel, linked together by a central stalk and a peripheral stalk. During catalysis, ATP synthesis in the catalytic domain of F(1) is coupled via a rotary mechanism of the central stalk subunits to proton translocation. Functionally, catalytic subunit beta, of the mitochondrial membrane ATP synthase complex (F(1)F(0) ATP synthase or Complex V) that produces ATP from ADP in the presence of a proton gradient across the membrane which is generated by electron transport complexes of the respiratory chain. ATP synthase complex consist of a soluble F(1) head domain - the catalytic core - and a membrane F(1) domain - the membrane proton channel. These two domains are linked by a central stalk rotating inside the F(1) region and a stationary peripheral stalk. During catalysis, ATP synthesis in the catalytic domain of F(1) is coupled via a rotary mechanism of the central stalk subunits to proton translocation. In vivo, can only synthesize ATP although its ATP hydrolase activity can be activated artificially in vitro. With the subunit alpha (ATP5F1A), forms the catalytic core in the F(1) domain. This Rattus norvegicus (Rat) protein is ATP synthase F(1) complex catalytic subunit beta, mitochondrial.